Consider the following 207-residue polypeptide: Large ribosomal subunit protein uL4 (207 aa).

The disordered stretch occupies residues 49–78 (HAVKNRSAVSGGGRKPWRQKGTGRARQGSI).

This sequence belongs to the universal ribosomal protein uL4 family. In terms of assembly, part of the 50S ribosomal subunit.

One of the primary rRNA binding proteins, this protein initially binds near the 5'-end of the 23S rRNA. It is important during the early stages of 50S assembly. It makes multiple contacts with different domains of the 23S rRNA in the assembled 50S subunit and ribosome. Its function is as follows. Forms part of the polypeptide exit tunnel. The protein is Large ribosomal subunit protein uL4 of Streptococcus gordonii (strain Challis / ATCC 35105 / BCRC 15272 / CH1 / DL1 / V288).